A 597-amino-acid polypeptide reads, in one-letter code: Spastin (597 aa).

The Cytoplasmic segment spans residues 1–20 (MPNNDILRPLAIPAKYVGSF). The segment at residues 21 to 37 (LVFLYNGLYFVFVVNLW) is an intramembrane region (helical). The Cytoplasmic portion of the chain corresponds to 38–597 (SRLFGKATKT…DWNRLYGSNA (560 aa)). Residues 56–80 (RKLGKDMASRAPPRRGQSSEDNEDG) form a disordered region. The 78-residue stretch at 91 to 168 (HHKQAYAYIA…ENTRERMDEL (78 aa)) folds into the MIT domain. The segment at 193–289 (SARKTSSEPS…PAMMAKQSCV (97 aa)) is disordered. Residues 214-231 (SYKQSKSYKNSTTVTTKR) show a composition bias toward polar residues. The span at 232-252 (SQASPSFSSSSSSVNSTAGSS) shows a compositional bias: low complexity.

Belongs to the AAA ATPase family. Spastin subfamily. Homohexamer. The homohexamer is stabilized by ATP-binding. The homohexamer may adopt a ring conformation through which microtubules pass prior to being severed. Interacts with microtubules.

It is found in the membrane. Its subcellular location is the cytoplasm. The protein localises to the cytoskeleton. It localises to the microtubule organizing center. The protein resides in the centrosome. It catalyses the reaction n ATP + n H2O + a microtubule = n ADP + n phosphate + (n+1) alpha/beta tubulin heterodimers.. In terms of biological role, ATP-dependent microtubule severing protein. Microtubule severing may promote reorganization of cellular microtubule arrays and the release of microtubules from the microtubule organizing center following nucleation. The chain is Spastin from Nematostella vectensis (Starlet sea anemone).